We begin with the raw amino-acid sequence, 77 residues long: Protein OPG195 (77 aa).

Positions 1 to 17 are cleaved as a signal peptide; it reads MRSLIIVLLFPSIIYSM.

This sequence belongs to the chordopoxvirinae B9 protein family.

The polypeptide is Protein OPG195 (OPG197) (Homo sapiens (Human)).